The following is a 944-amino-acid chain: Leucine--tRNA ligase 2 (944 aa).

Positions 36 to 46 (PYPNSPWHIGH) match the 'HIGH' region motif. Positions 623 to 627 (KMSKS) match the 'KMSKS' region motif. Residue K626 coordinates ATP.

It belongs to the class-I aminoacyl-tRNA synthetase family.

It localises to the cytoplasm. It catalyses the reaction tRNA(Leu) + L-leucine + ATP = L-leucyl-tRNA(Leu) + AMP + diphosphate. The sequence is that of Leucine--tRNA ligase 2 from Saccharolobus solfataricus (strain ATCC 35092 / DSM 1617 / JCM 11322 / P2) (Sulfolobus solfataricus).